The chain runs to 291 residues: uncharacterized protein (291 aa).

Functionally, essential for virus function. This is an uncharacterized protein from Sulfolobus spindle-shape virus 1 (SSV1).